We begin with the raw amino-acid sequence, 402 residues long: 3-dehydroquinate synthase (402 aa).

This sequence belongs to the archaeal-type DHQ synthase family.

The catalysed reaction is 2-amino-2,3,7-trideoxy-D-lyxo-hept-6-ulosonate + NAD(+) + H2O = 3-dehydroquinate + NH4(+) + NADH + H(+). Functionally, catalyzes the oxidative deamination and cyclization of 2-amino-3,7-dideoxy-D-threo-hept-6-ulosonic acid (ADH) to yield 3-dehydroquinate (DHQ), which is fed into the canonical shikimic pathway of aromatic amino acid biosynthesis. In Methanopyrus kandleri (strain AV19 / DSM 6324 / JCM 9639 / NBRC 100938), this protein is 3-dehydroquinate synthase.